The primary structure comprises 269 residues: JmjC domain-containing protein 8 (269 aa).

An N-terminal signal peptide occupies residues 1–24; it reads MAAAGRRGLLLLFVLWMMVTVILP. N-linked (GlcNAc...) asparagine glycans are attached at residues N135, N145, and N214. The 134-residue stretch at 136 to 269 folds into the JmjC domain; sequence DTLYFFGDNN…TSVFISTFLG (134 aa).

Oligomer. Dimer. Interacts with PKM; regulates angiogenesis and metabolism. In terms of processing, N-glycosylated.

It is found in the endoplasmic reticulum lumen. The protein localises to the cytoplasm. Functionally, functions as a positive regulator of TNF-induced NF-kappaB signaling. Regulates angiogenesis and cellular metabolism through interaction with PKM. This chain is JmjC domain-containing protein 8, found in Mus musculus (Mouse).